The following is a 108-amino-acid chain: Thiosulfate sulfurtransferase GlpE (108 aa).

Residues 18–106 (ENEGATLADI…WERSGLPIET (89 aa)) enclose the Rhodanese domain. The active-site Cysteine persulfide intermediate is the cysteine 66.

The protein belongs to the GlpE family.

The protein localises to the cytoplasm. It catalyses the reaction thiosulfate + hydrogen cyanide = thiocyanate + sulfite + 2 H(+). The enzyme catalyses thiosulfate + [thioredoxin]-dithiol = [thioredoxin]-disulfide + hydrogen sulfide + sulfite + 2 H(+). Functionally, transferase that catalyzes the transfer of sulfur from thiosulfate to thiophilic acceptors such as cyanide or dithiols. May function in a CysM-independent thiosulfate assimilation pathway by catalyzing the conversion of thiosulfate to sulfite, which can then be used for L-cysteine biosynthesis. In Actinobacillus pleuropneumoniae serotype 3 (strain JL03), this protein is Thiosulfate sulfurtransferase GlpE.